Reading from the N-terminus, the 367-residue chain is Glutamate 5-kinase 2 (367 aa).

ATP is bound at residue Lys10. Residues Ser50, Asp136, and Asn148 each contribute to the substrate site. Residues 168-169 and 210-216 each bind ATP; these read TD and TGGMATK. One can recognise a PUA domain in the interval 275-353; that stretch reads SGQIVIDAGA…KQIGELLDYD (79 aa).

The protein belongs to the glutamate 5-kinase family.

The protein resides in the cytoplasm. The catalysed reaction is L-glutamate + ATP = L-glutamyl 5-phosphate + ADP. It participates in amino-acid biosynthesis; L-proline biosynthesis; L-glutamate 5-semialdehyde from L-glutamate: step 1/2. In terms of biological role, catalyzes the transfer of a phosphate group to glutamate to form L-glutamate 5-phosphate. This chain is Glutamate 5-kinase 2, found in Pseudoalteromonas translucida (strain TAC 125).